Here is a 1382-residue protein sequence, read N- to C-terminus: Hepatocyte growth factor receptor (1382 aa).

Positions 1–24 (MRAPAVLAPGILVLLFTLVQRSCG) are cleaved as a signal peptide. At 25–933 (ECKEALVKSE…VIVQPDQNFT (909 aa)) the chain is on the extracellular side. A Sema domain is found at 27–516 (KEALVKSEMN…TGKKITKIPL (490 aa)). The N-linked (GlcNAc...) asparagine glycan is linked to N45. Disulfide bonds link C95–C101, C98–C160, C133–C141, and C173–C176. A glycan (N-linked (GlcNAc...) asparagine) is linked at N106. Residues N203 and N359 are each glycosylated (N-linked (GlcNAc...) asparagine). Intrachain disulfides connect C299–C364 and C386–C398. 2 N-linked (GlcNAc...) asparagine glycosylation sites follow: N400 and N406. 4 disulfide bridges follow: C521-C539, C527-C562, C530-C546, and C542-C552. IPT/TIG domains follow at residues 564–656 (PTIY…FSYV), 658–740 (PIIT…FSYQ), and 743–837 (PIVY…LIYV). T583 carries O-linked (Man) threonine glycosylation. N608 and N636 each carry an N-linked (GlcNAc...) asparagine glycan. O-linked (Man) threonine glycosylation is found at T677 and T762. 3 N-linked (GlcNAc...) asparagine glycosylation sites follow: N786, N880, and N931. The chain crosses the membrane as a helical span at residues 934 to 956 (GLIVGVISISLIVLLLLGLFLWL). At 957-1382 (KRRKQIKDLG…QDIIDGEGDT (426 aa)) the chain is on the cytoplasmic side. S967 carries the phosphoserine modification. T978 bears the Phosphothreonine mark. S991, S998, and S1001 each carry phosphoserine. Phosphotyrosine is present on Y1004. Residues 1079–1346 (VHFNEVIGRG…RISAIFSTFI (268 aa)) form the Protein kinase domain. ATP-binding positions include 1085–1093 (IGRGHFGCV) and K1111. Catalysis depends on D1205, which acts as the Proton acceptor. Residues 1213–1382 (LDEKFTVKVA…QDIIDGEGDT (170 aa)) form an interaction with RANBP9 region. Residue Y1231 is modified to Phosphotyrosine. Residues Y1235 and Y1236 each carry the phosphotyrosine; by autocatalysis modification. At T1290 the chain carries Phosphothreonine. An interaction with MUC20 region spans residues 1321–1360 (WHPKAELRPSFSELVSRISAIFSTFIGEHYVHVNATYVNV). Phosphotyrosine; by autocatalysis occurs at positions 1350 and 1357. Y1366 bears the Phosphotyrosine mark.

The protein belongs to the protein kinase superfamily. Tyr protein kinase family. In terms of assembly, heterodimer made of an alpha chain (50 kDa) and a beta chain (145 kDa) which are disulfide linked. Binds PLXNB1. Interacts when phosphorylated with downstream effectors including STAT3, PIK3R1, SRC, PCLG1, GRB2 and GAB1. Interacts with SPSB1, SPSB2 and SPSB4. Interacts with INPP5D/SHIP1. When phosphorylated at Tyr-1357, interacts with INPPL1/SHIP2. Interacts with RANBP9 and RANBP10, as well as SPSB1, SPSB2, SPSB3 and SPSB4. SPSB1 binding occurs in the presence and in the absence of HGF, however HGF treatment has a positive effect on this interaction. Interacts with MUC20; prevents interaction with GRB2 and suppresses hepatocyte growth factor-induced cell proliferation. Interacts with GRB10. Interacts with PTPN1 and PTPN2. Interacts with HSP90AA1 and HSP90AB1; the interaction suppresses MET kinase activity. Interacts with tensin TNS3. Interacts (when phosphorylated) with tensin TNS4 (via SH2 domain); the interaction increases MET protein stability by inhibiting MET endocytosis and subsequent lysosomal degradation. Autophosphorylated in response to ligand binding on Tyr-1235 and Tyr-1236 in the kinase domain leading to further phosphorylation of Tyr-1350 and Tyr-1357 in the C-terminal multifunctional docking site. Dephosphorylated by PTPRJ at Tyr-1350 and Tyr-1366. Dephosphorylated by PTPN1 and PTPN2. Post-translationally, ubiquitinated. Ubiquitination by CBL regulates the receptor stability and activity through proteasomal degradation. In terms of processing, O-mannosylation of IPT/TIG domains by TMEM260 is required for protein maturation. O-mannosylated residues are composed of single mannose glycans that are not elongated or modified.

The protein localises to the membrane. It carries out the reaction L-tyrosyl-[protein] + ATP = O-phospho-L-tyrosyl-[protein] + ADP + H(+). In its inactive state, the C-terminal tail interacts with the catalytic domain and inhibits the kinase activity. Upon ligand binding, the C-terminal tail is displaced and becomes phosphorylated, thus increasing the kinase activity. Receptor tyrosine kinase that transduces signals from the extracellular matrix into the cytoplasm by binding to hepatocyte growth factor/HGF ligand. Regulates many physiological processes including proliferation, scattering, morphogenesis and survival. Ligand binding at the cell surface induces autophosphorylation of MET on its intracellular domain that provides docking sites for downstream signaling molecules. Following activation by ligand, interacts with the PI3-kinase subunit PIK3R1, PLCG1, SRC, GRB2, STAT3 or the adapter GAB1. Recruitment of these downstream effectors by MET leads to the activation of several signaling cascades including the RAS-ERK, PI3 kinase-AKT, or PLCgamma-PKC. The RAS-ERK activation is associated with the morphogenetic effects while PI3K/AKT coordinates prosurvival effects. During embryonic development, MET signaling plays a role in gastrulation, development and migration of muscles and neuronal precursors, angiogenesis and kidney formation. In adults, participates in wound healing as well as organ regeneration and tissue remodeling. Also promotes differentiation and proliferation of hematopoietic cells. In Mustela putorius furo (European domestic ferret), this protein is Hepatocyte growth factor receptor (MET).